A 239-amino-acid chain; its full sequence is tRNA (guanine-N(7)-)-methyltransferase (239 aa).

Glutamate 69, glutamate 94, aspartate 121, and aspartate 144 together coordinate S-adenosyl-L-methionine. Aspartate 144 is a catalytic residue. Lysine 148 provides a ligand contact to substrate. The tract at residues 150–155 (RHNKRR) is interaction with RNA. Substrate-binding positions include aspartate 180 and 217 to 220 (TKFE).

This sequence belongs to the class I-like SAM-binding methyltransferase superfamily. TrmB family. Monomer.

The enzyme catalyses guanosine(46) in tRNA + S-adenosyl-L-methionine = N(7)-methylguanosine(46) in tRNA + S-adenosyl-L-homocysteine. It functions in the pathway tRNA modification; N(7)-methylguanine-tRNA biosynthesis. In terms of biological role, catalyzes the formation of N(7)-methylguanine at position 46 (m7G46) in tRNA. The sequence is that of tRNA (guanine-N(7)-)-methyltransferase from Photorhabdus laumondii subsp. laumondii (strain DSM 15139 / CIP 105565 / TT01) (Photorhabdus luminescens subsp. laumondii).